A 727-amino-acid chain; its full sequence is Elongation factor 2 (727 aa).

The tr-type G domain maps to 19 to 260 (DQIRNMGICA…MAIKHLPNPL (242 aa)). GTP is bound by residues 28–35 (AHIDHGKT), 94–98 (DTPGH), and 148–151 (NKVD). His603 carries the diphthamide modification.

It belongs to the TRAFAC class translation factor GTPase superfamily. Classic translation factor GTPase family. EF-G/EF-2 subfamily.

It localises to the cytoplasm. Functionally, catalyzes the GTP-dependent ribosomal translocation step during translation elongation. During this step, the ribosome changes from the pre-translocational (PRE) to the post-translocational (POST) state as the newly formed A-site-bound peptidyl-tRNA and P-site-bound deacylated tRNA move to the P and E sites, respectively. Catalyzes the coordinated movement of the two tRNA molecules, the mRNA and conformational changes in the ribosome. The protein is Elongation factor 2 of Methanococcus maripaludis (strain C7 / ATCC BAA-1331).